The primary structure comprises 173 residues: Photosystem I assembly protein Ycf3 (173 aa).

TPR repeat units follow at residues 35–68 (AYVYYRDGLSAQNAGDYAEALENYEESLKLEESP), 72–105 (SETLKNMAIIYMSNGDEDLALDTYQRALDQNSNQ), and 120–153 (GRTAQEAGLQDEADRLFDRAADVWTQAVRLYPGG).

The protein belongs to the Ycf3 family.

Its subcellular location is the cellular thylakoid membrane. Essential for the assembly of the photosystem I (PSI) complex. May act as a chaperone-like factor to guide the assembly of the PSI subunits. The polypeptide is Photosystem I assembly protein Ycf3 (Prochlorococcus marinus (strain MIT 9313)).